The following is a 342-amino-acid chain: Probable dual-specificity RNA methyltransferase RlmN (342 aa).

The Proton acceptor role is filled by Glu91. The Radical SAM core domain occupies 97 to 327 (YKHGNSICVS…TTIRREMGAD (231 aa)). Cys104 and Cys332 are disulfide-bonded. 3 residues coordinate [4Fe-4S] cluster: Cys111, Cys115, and Cys118. Residues 158-159 (GE), Ser190, 213-215 (SLH), and Asn289 contribute to the S-adenosyl-L-methionine site. Cys332 acts as the S-methylcysteine intermediate in catalysis.

Belongs to the radical SAM superfamily. RlmN family. The cofactor is [4Fe-4S] cluster.

It localises to the cytoplasm. It catalyses the reaction adenosine(2503) in 23S rRNA + 2 reduced [2Fe-2S]-[ferredoxin] + 2 S-adenosyl-L-methionine = 2-methyladenosine(2503) in 23S rRNA + 5'-deoxyadenosine + L-methionine + 2 oxidized [2Fe-2S]-[ferredoxin] + S-adenosyl-L-homocysteine. The enzyme catalyses adenosine(37) in tRNA + 2 reduced [2Fe-2S]-[ferredoxin] + 2 S-adenosyl-L-methionine = 2-methyladenosine(37) in tRNA + 5'-deoxyadenosine + L-methionine + 2 oxidized [2Fe-2S]-[ferredoxin] + S-adenosyl-L-homocysteine. Specifically methylates position 2 of adenine 2503 in 23S rRNA and position 2 of adenine 37 in tRNAs. The chain is Probable dual-specificity RNA methyltransferase RlmN from Clostridium botulinum (strain Langeland / NCTC 10281 / Type F).